A 160-amino-acid chain; its full sequence is Cyclic pyranopterin monophosphate synthase (160 aa).

Substrate contacts are provided by residues 74 to 76 and 112 to 113; these read LSH and ME. The active site involves Asp-127.

Belongs to the MoaC family. Homohexamer; trimer of dimers.

It catalyses the reaction (8S)-3',8-cyclo-7,8-dihydroguanosine 5'-triphosphate = cyclic pyranopterin phosphate + diphosphate. It participates in cofactor biosynthesis; molybdopterin biosynthesis. Catalyzes the conversion of (8S)-3',8-cyclo-7,8-dihydroguanosine 5'-triphosphate to cyclic pyranopterin monophosphate (cPMP). The polypeptide is Cyclic pyranopterin monophosphate synthase (Geobacter sulfurreducens (strain ATCC 51573 / DSM 12127 / PCA)).